A 309-amino-acid polypeptide reads, in one-letter code: Mitochondrial fission regulator 1-like (309 aa).

Residues 189-221 (DVTEEDEEEEEEEDREEEEEDVSELVPDPMPPV) are disordered. A compositionally biased stretch (acidic residues) spans 190–211 (VTEEDEEEEEEEDREEEEEDVS). Residue Ser-253 is modified to Phosphoserine.

It belongs to the MTFR1 family.

It is found in the mitochondrion outer membrane. Mitochondrial protein required for adaptation of miochondrial dynamics to metabolic changes. Regulates mitochondrial morphology at steady state and mediates AMPK-dependent stress-induced mitochondrial fragmentation via the control of OPA1 levels. This chain is Mitochondrial fission regulator 1-like (mtfr1l), found in Danio rerio (Zebrafish).